Here is a 430-residue protein sequence, read N- to C-terminus: Glutamate-1-semialdehyde 2,1-aminomutase (430 aa).

Residue Lys265 is modified to N6-(pyridoxal phosphate)lysine.

Belongs to the class-III pyridoxal-phosphate-dependent aminotransferase family. HemL subfamily. In terms of assembly, homodimer. It depends on pyridoxal 5'-phosphate as a cofactor.

It is found in the cytoplasm. It catalyses the reaction (S)-4-amino-5-oxopentanoate = 5-aminolevulinate. The protein operates within porphyrin-containing compound metabolism; protoporphyrin-IX biosynthesis; 5-aminolevulinate from L-glutamyl-tRNA(Glu): step 2/2. This chain is Glutamate-1-semialdehyde 2,1-aminomutase, found in Shewanella baltica (strain OS155 / ATCC BAA-1091).